Here is a 1068-residue protein sequence, read N- to C-terminus: Huntingtin-interacting protein 1-related protein (1068 aa).

Methionine 1 is subject to N-acetylmethionine. The 129-residue stretch at 23–151 (EREQFDKTQA…SFHLKHPQFP (129 aa)) folds into the ENTH domain. A coiled-coil region spans residues 347–599 (SVKDDRDLQI…RSSQEQGELQ (253 aa)). Disordered regions lie at residues 424–443 (LEGERSQGLREEAERKASAT), 529–549 (ARAQEALSHTEQSKSELSSRL), and 582–608 (AALSREQQRSSQEQGELQGRLAERESQ). 2 stretches are compositionally biased toward basic and acidic residues: residues 425–443 (EGERSQGLREEAERKASAT) and 539–549 (EQSKSELSSRL). The segment covering 590–600 (RSSQEQGELQG) has biased composition (low complexity). An I/LWEQ domain is found at 771-1012 (SLDVRQEELG…ELRKQHYVLA (242 aa)). Residues 867-924 (RWTEGLISASKAVGWGATQLVEAADKVVLHTGKYEELIVCSHEIAASTAQLVAASKVK) are important for actin binding. A disordered region spans residues 1016 to 1060 (GSPGEEVAIRPSTAPRSVTTKKPPLAQKPSVAPRQDHQLDKKDGI). A Phosphoserine modification is found at serine 1017. The segment covering 1049–1059 (RQDHQLDKKDG) has biased composition (basic and acidic residues).

It belongs to the SLA2 family. Homodimer. Interacts with actin; homodimerization promotes actin binding. Interacts with CLTB. Interacts with HIP1. Interacts (via ENTH and I/LWEQ domains) with BCL2L10. In terms of tissue distribution, brain, heart, kidney, pancreas, and liver, but not in lung or placenta.

Its subcellular location is the cytoplasm. It localises to the perinuclear region. The protein resides in the endomembrane system. It is found in the cytoplasmic vesicle. The protein localises to the clathrin-coated vesicle membrane. Functionally, component of clathrin-coated pits and vesicles, that may link the endocytic machinery to the actin cytoskeleton. Binds 3-phosphoinositides (via ENTH domain). May act through the ENTH domain to promote cell survival by stabilizing receptor tyrosine kinases following ligand-induced endocytosis. In Homo sapiens (Human), this protein is Huntingtin-interacting protein 1-related protein (HIP1R).